A 333-amino-acid polypeptide reads, in one-letter code: Protein pelota homolog (333 aa).

It belongs to the eukaryotic release factor 1 family. Pelota subfamily. As to quaternary structure, monomer. It depends on a divalent metal cation as a cofactor.

It localises to the cytoplasm. Functionally, may function in recognizing stalled ribosomes, interact with stem-loop structures in stalled mRNA molecules, and effect endonucleolytic cleavage of the mRNA. May play a role in the release non-functional ribosomes and degradation of damaged mRNAs. Has endoribonuclease activity. This Pyrobaculum arsenaticum (strain DSM 13514 / JCM 11321 / PZ6) protein is Protein pelota homolog.